We begin with the raw amino-acid sequence, 271 residues long: 5-deoxy-glucuronate isomerase (271 aa).

Belongs to the isomerase IolB family.

The catalysed reaction is 5-deoxy-D-glucuronate = 5-dehydro-2-deoxy-D-gluconate. It participates in polyol metabolism; myo-inositol degradation into acetyl-CoA; acetyl-CoA from myo-inositol: step 4/7. Functionally, involved in the isomerization of 5-deoxy-glucuronate (5DG) to 5-dehydro-2-deoxy-D-gluconate (DKG or 2-deoxy-5-keto-D-gluconate). The sequence is that of 5-deoxy-glucuronate isomerase from Bacillus velezensis (strain DSM 23117 / BGSC 10A6 / LMG 26770 / FZB42) (Bacillus amyloliquefaciens subsp. plantarum).